Consider the following 226-residue polypeptide: UPF0758 protein M6_Spy0838 (226 aa).

An MPN domain is found at S103–L225. H174, H176, and D187 together coordinate Zn(2+). Positions H174 to D187 match the JAMM motif motif.

This sequence belongs to the UPF0758 family.

This is UPF0758 protein M6_Spy0838 from Streptococcus pyogenes serotype M6 (strain ATCC BAA-946 / MGAS10394).